We begin with the raw amino-acid sequence, 202 residues long: Large ribosomal subunit protein bL17 (202 aa).

The tract at residues 148–202 (DEAPAAESTDAAQVEAGGVEQPDTLPDADAPATADEGVEVDAAEVDPSDEKKDQA) is disordered. The span at 169–182 (PDTLPDADAPATAD) shows a compositional bias: low complexity. The segment covering 183–194 (EGVEVDAAEVDP) has biased composition (acidic residues).

Belongs to the bacterial ribosomal protein bL17 family. Part of the 50S ribosomal subunit. Contacts protein L32.

This chain is Large ribosomal subunit protein bL17, found in Kineococcus radiotolerans (strain ATCC BAA-149 / DSM 14245 / SRS30216).